The primary structure comprises 690 residues: MSTSMPTALAGGRYQLGQLIGRGGMAEVHVALDTRLGRTVAVKIMRADLANDDIFLARFRREAHAVAQMNNPNIVNIYDSGEELVSSESGDAERLPYIVMEYVKGQTLRDIIKVNGALSQRDCEQVMLGVLNALDYSHRMGIIHRDIKPGNIMISEQGVVKVMDFGIARALDDSAATMTQSQGVVGTAQYLSPEQARGETVDMRSDLYSAGCVLYEMLTGRPPFTGDSAVAIAYQHVSEVATPPSAAVPGLPKMWDSICAKAMAKDRQNRYATASEFKTDILTYMNGGVPVAAAFNPLTDLSNMKARKEAERDLPTTPVEPHQQPTQAFNPVTGQFEQIPPANGANAAALQSRAQQRAAAAKAKKRKKIIIGSVIAAIVAVLVIVGIVFAMNGSGNKSSEDTVTIPEVCNASTSKDNIKLKLEASGLKMTEKQDTDSTEPEGTCTKMSPDAGSKVAKGSAVKVWFSAGPQSTQVPDVKERSQEEARSILESAGFKVNAAVKTEDSADIAKDMVTKTDPAAGQSVPKGTTITIYVSSGMTTVPSNLVGQSKDSVLQQYEGKFSFTVEQESSDTVEAGLITRVSPDSGSSIAQGGFITIWVSTGKEKVAVPNITAGTDYVTAELMLKAVGLKAQANGPTGSTAVVVSINPGAGSQVDAGSTVTITTKAGSTGGGTGTGDGGNGTGNGGGTGE.

The Protein kinase domain maps to 14–285 (YQLGQLIGRG…EFKTDILTYM (272 aa)). ATP contacts are provided by residues 20–28 (IGRGGMAEV) and lysine 43. Catalysis depends on aspartate 146, which acts as the Proton acceptor. PASTA domains follow at residues 399–467 (SEDT…WFSA), 468–536 (GPQS…YVSS), 540–601 (TVPS…WVST), and 602–666 (GKEK…TTKA). Residues 429–453 (MTEKQDTDSTEPEGTCTKMSPDAGS) form a disordered region. Residues 665 to 690 (KAGSTGGGTGTGDGGNGTGNGGGTGE) are disordered. Residues 668 to 690 (STGGGTGTGDGGNGTGNGGGTGE) are compositionally biased toward gly residues.

The protein belongs to the protein kinase superfamily. Ser/Thr protein kinase family.

It catalyses the reaction L-seryl-[protein] + ATP = O-phospho-L-seryl-[protein] + ADP + H(+). It carries out the reaction L-threonyl-[protein] + ATP = O-phospho-L-threonyl-[protein] + ADP + H(+). In Bifidobacterium longum (strain NCC 2705), this protein is Probable serine/threonine-protein kinase PknB (pknB).